The chain runs to 216 residues: Imidazoleglycerol-phosphate dehydratase (216 aa).

The protein belongs to the imidazoleglycerol-phosphate dehydratase family.

Its subcellular location is the cytoplasm. The enzyme catalyses D-erythro-1-(imidazol-4-yl)glycerol 3-phosphate = 3-(imidazol-4-yl)-2-oxopropyl phosphate + H2O. The protein operates within amino-acid biosynthesis; L-histidine biosynthesis; L-histidine from 5-phospho-alpha-D-ribose 1-diphosphate: step 6/9. This Nocardia farcinica (strain IFM 10152) protein is Imidazoleglycerol-phosphate dehydratase.